Reading from the N-terminus, the 381-residue chain is Succinyl-diaminopimelate desuccinylase (381 aa).

Histidine 71 serves as a coordination point for Zn(2+). Aspartate 73 is an active-site residue. Aspartate 104 serves as a coordination point for Zn(2+). The active-site Proton acceptor is glutamate 136. The Zn(2+) site is built by glutamate 137, glutamate 166, and histidine 351.

This sequence belongs to the peptidase M20A family. DapE subfamily. Homodimer. The cofactor is Zn(2+). Co(2+) serves as cofactor.

The catalysed reaction is N-succinyl-(2S,6S)-2,6-diaminopimelate + H2O = (2S,6S)-2,6-diaminopimelate + succinate. Its pathway is amino-acid biosynthesis; L-lysine biosynthesis via DAP pathway; LL-2,6-diaminopimelate from (S)-tetrahydrodipicolinate (succinylase route): step 3/3. Its function is as follows. Catalyzes the hydrolysis of N-succinyl-L,L-diaminopimelic acid (SDAP), forming succinate and LL-2,6-diaminopimelate (DAP), an intermediate involved in the bacterial biosynthesis of lysine and meso-diaminopimelic acid, an essential component of bacterial cell walls. The protein is Succinyl-diaminopimelate desuccinylase of Ehrlichia chaffeensis (strain ATCC CRL-10679 / Arkansas).